Here is a 450-residue protein sequence, read N- to C-terminus: ADP-specific phosphofructokinase (450 aa).

The region spanning 1-449 is the ADPK domain; the sequence is MIPEHLSIYT…FLTYLEFLKR (449 aa). Glutamate 260, glutamate 290, and aspartate 433 together coordinate Mg(2+). Catalysis depends on aspartate 433, which acts as the Proton acceptor.

It belongs to the carbohydrate kinase PfkC family. The cofactor is Mg(2+).

It localises to the cytoplasm. It catalyses the reaction beta-D-fructose 6-phosphate + ADP = beta-D-fructose 1,6-bisphosphate + AMP + H(+). It functions in the pathway carbohydrate degradation; glycolysis. Catalyzes the phosphorylation of fructose 6-phosphate to fructose 1,6-bisphosphate using ADP as the phosphate donor. This Pyrococcus horikoshii (strain ATCC 700860 / DSM 12428 / JCM 9974 / NBRC 100139 / OT-3) protein is ADP-specific phosphofructokinase.